Reading from the N-terminus, the 249-residue chain is FMN reductase [NAD(P)H] (249 aa).

Residues 11–15, Gln67, 134–136, and 173–175 each bind FMN; these read HRSIR, PIG, and KPR.

It belongs to the flavin oxidoreductase frp family. As to quaternary structure, homodimer.

It catalyses the reaction FMNH2 + NADP(+) = FMN + NADPH + 2 H(+). The catalysed reaction is FMNH2 + NAD(+) = FMN + NADH + 2 H(+). With respect to regulation, FMN is a competitive inhibitor of NADH, and therefore leads to the preferential utilization of NADPH. In terms of biological role, reduces FMNH(2) to FMN, with NADH or NADPH as reductant. It also reduces nitroaromatic compounds, quinones, chromates and azo dyes. It could supply the reduced form of FMN to luciferase-like protein and contribute to the degradation of aromatic compounds. This is FMN reductase [NAD(P)H] (nfrA2) from Bacillus subtilis (strain 168).